The sequence spans 171 residues: Co-chaperone protein HscB homolog (171 aa).

Positions 2-74 constitute a J domain; sequence NHFELFGLPP…ISRAEYLLSQ (73 aa).

It belongs to the HscB family. Interacts with HscA and stimulates its ATPase activity.

Functionally, co-chaperone involved in the maturation of iron-sulfur cluster-containing proteins. Seems to help targeting proteins to be folded toward HscA. The protein is Co-chaperone protein HscB homolog of Vibrio vulnificus (strain YJ016).